The primary structure comprises 317 residues: 3',5'-bisphosphate nucleotidase (317 aa).

Asp46 serves as the catalytic Proton acceptor. Residues Glu69, Asp118, Ile120, and Asp121 each contribute to the Mg(2+) site. Thr123 serves as the catalytic Proton acceptor. Thr123 provides a ligand contact to adenosine 3',5'-bisphosphate. Ser198, His203, Ser227, Lys230, Arg244, Tyr251, and Asp257 together coordinate AMP. Residues His203, Ser227, Lys230, and Arg244 each contribute to the adenosine 3',5'-bisphosphate site. Asp257 serves as a coordination point for Mg(2+). Residue Asp257 coordinates adenosine 3',5'-bisphosphate.

Belongs to the inositol monophosphatase superfamily. As to quaternary structure, monomer. Requires Mg(2+) as cofactor.

The protein resides in the cytoplasm. The catalysed reaction is adenosine 3',5'-bisphosphate + H2O = AMP + phosphate. It carries out the reaction 1D-myo-inositol 1,4-bisphosphate + H2O = 1D-myo-inositol 4-phosphate + phosphate. Inhibited by Li(2+). In terms of biological role, phosphatase that converts 3'-phosphoadenosine 5'-phosphate (PAP) to AMP. Is also able to hydrolyze inositol 1,4-bisphosphate but with less efficiency. The sequence is that of 3',5'-bisphosphate nucleotidase from Entamoeba histolytica (strain ATCC 30459 / HM-1:IMSS / ABRM).